A 395-amino-acid chain; its full sequence is 1-deoxy-D-xylulose 5-phosphate reductoisomerase (395 aa).

T15, G16, S17, I18, G41, N43, and N126 together coordinate NADPH. K127 lines the 1-deoxy-D-xylulose 5-phosphate pocket. E128 serves as a coordination point for NADPH. D152 contributes to the Mn(2+) binding site. 1-deoxy-D-xylulose 5-phosphate-binding residues include S153, E154, S178, and H201. E154 lines the Mn(2+) pocket. G207 is an NADPH binding site. Residues S214, N219, K220, and E223 each coordinate 1-deoxy-D-xylulose 5-phosphate. E223 contacts Mn(2+).

Belongs to the DXR family. Requires Mg(2+) as cofactor. Mn(2+) is required as a cofactor.

The catalysed reaction is 2-C-methyl-D-erythritol 4-phosphate + NADP(+) = 1-deoxy-D-xylulose 5-phosphate + NADPH + H(+). Its pathway is isoprenoid biosynthesis; isopentenyl diphosphate biosynthesis via DXP pathway; isopentenyl diphosphate from 1-deoxy-D-xylulose 5-phosphate: step 1/6. Functionally, catalyzes the NADPH-dependent rearrangement and reduction of 1-deoxy-D-xylulose-5-phosphate (DXP) to 2-C-methyl-D-erythritol 4-phosphate (MEP). This is 1-deoxy-D-xylulose 5-phosphate reductoisomerase from Ruegeria sp. (strain TM1040) (Silicibacter sp.).